A 697-amino-acid polypeptide reads, in one-letter code: uncharacterized protein (697 aa).

5 consecutive transmembrane segments (helical) span residues 45–65 (LCAVTAIISVVVPFAAGLALL), 86–106 (TVAAGMIAFLIAGLGGFMGVV), 128–148 (VVVSSLIGGFVFGAAMVGMLA), 198–218 (VLLGYFNIGIMIVSLIGWWAL), and 280–300 (HLAIIGANGSGKTTLMLILAG). 2 consecutive ABC transporter domains span residues 251-473 (VRLD…QPQH) and 477-696 (LELV…AGGM). Residues 285–292 (GANGSGKT) and 514–521 (GGNGSGKS) contribute to the ATP site. The chain crosses the membrane as a helical span at residues 522-542 (TLAWIMAGLTIPTTGACLLDG).

Belongs to the ABC transporter superfamily.

It localises to the cell membrane. This is an uncharacterized protein from Mycobacterium tuberculosis (strain CDC 1551 / Oshkosh).